Reading from the N-terminus, the 85-residue chain is Large ribosomal subunit protein bL27 (85 aa).

The protein belongs to the bacterial ribosomal protein bL27 family.

This is Large ribosomal subunit protein bL27 from Sodalis glossinidius (strain morsitans).